Consider the following 190-residue polypeptide: Holliday junction branch migration complex subunit RuvA (190 aa).

Residues 1–64 are domain I; it reads MIGKLTGTLL…EDAQLLYGFG (64 aa). Residues 65-137 form a domain II region; that stretch reads TAQERQAFRE…LKGKLGADVG (73 aa). Residues 137 to 141 form a flexible linker region; that stretch reads GVRAH. A domain III region spans residues 142-190; sequence AANDNQADILQALLALGYNDKEAAAALKALPADVGVSEGIKLALKSLSK.

The protein belongs to the RuvA family. Homotetramer. Forms an RuvA(8)-RuvB(12)-Holliday junction (HJ) complex. HJ DNA is sandwiched between 2 RuvA tetramers; dsDNA enters through RuvA and exits via RuvB. An RuvB hexamer assembles on each DNA strand where it exits the tetramer. Each RuvB hexamer is contacted by two RuvA subunits (via domain III) on 2 adjacent RuvB subunits; this complex drives branch migration. In the full resolvosome a probable DNA-RuvA(4)-RuvB(12)-RuvC(2) complex forms which resolves the HJ.

The protein resides in the cytoplasm. Its function is as follows. The RuvA-RuvB-RuvC complex processes Holliday junction (HJ) DNA during genetic recombination and DNA repair, while the RuvA-RuvB complex plays an important role in the rescue of blocked DNA replication forks via replication fork reversal (RFR). RuvA specifically binds to HJ cruciform DNA, conferring on it an open structure. The RuvB hexamer acts as an ATP-dependent pump, pulling dsDNA into and through the RuvAB complex. HJ branch migration allows RuvC to scan DNA until it finds its consensus sequence, where it cleaves and resolves the cruciform DNA. The polypeptide is Holliday junction branch migration complex subunit RuvA (Acidovorax sp. (strain JS42)).